The following is a 229-amino-acid chain: Large ribosomal subunit protein uL1 (229 aa).

The protein belongs to the universal ribosomal protein uL1 family. In terms of assembly, part of the 50S ribosomal subunit.

Binds directly to 23S rRNA. The L1 stalk is quite mobile in the ribosome, and is involved in E site tRNA release. Functionally, protein L1 is also a translational repressor protein, it controls the translation of the L11 operon by binding to its mRNA. The sequence is that of Large ribosomal subunit protein uL1 from Streptococcus pneumoniae (strain ATCC 700669 / Spain 23F-1).